The chain runs to 650 residues: Chaperone protein DnaK (650 aa).

The residue at position 200 (Thr-200) is a Phosphothreonine; by autocatalysis. The segment covering 611 to 636 (AQQAGAAGAAGAAAEGASAQGGAQPA) has biased composition (low complexity). The disordered stretch occupies residues 611–650 (AQQAGAAGAAGAAAEGASAQGGAQPADDVVDADFKEVKKD).

Belongs to the heat shock protein 70 family.

Acts as a chaperone. This is Chaperone protein DnaK from Burkholderia mallei (strain NCTC 10247).